The sequence spans 845 residues: uncharacterized protein (845 aa).

Residues 224–241 (SNNIPTGIQDSSKYTVNG) show a composition bias toward polar residues. Disordered regions lie at residues 224–244 (SNNI…GPTE), 324–346 (QGTE…ANNG), 383–434 (RTAN…EGSA), 456–485 (VKAS…ATLN), 519–619 (NMTL…PKNS), 674–701 (VVSR…DSSP), and 739–785 (RKST…ANKS). The span at 390-399 (PTKKSNRSEQ) shows a compositional bias: basic and acidic residues. Polar residues predominate over residues 400-422 (SKTVANTNVGSKNGTTPRSFAQK). Residues 534-546 (NSWRSKYLSEGKN) are compositionally biased toward basic and acidic residues. The span at 563 to 576 (SSLASPTKSSASPL) shows a compositional bias: low complexity. Serine 567 is subject to Phosphoserine. 2 stretches are compositionally biased toward basic and acidic residues: residues 579 to 588 (APKETPERLC) and 600 to 614 (ANLK…KSDI). 3 stretches are compositionally biased toward polar residues: residues 674–683 (VVSRTVTSPK), 691–701 (SKASYNQDSSP), and 743–760 (ADSL…TPKA).

It localises to the mitochondrion. This is an uncharacterized protein from Schizosaccharomyces pombe (strain 972 / ATCC 24843) (Fission yeast).